The primary structure comprises 111 residues: Putative single-stranded DNA-binding protein ycf41 (111 aa).

Positions 1 to 98 (MNSCTLLVQI…FSTSRIFKYK (98 aa)) constitute an SSB domain.

Its subcellular location is the plastid. The protein localises to the chloroplast. This chain is Putative single-stranded DNA-binding protein ycf41 (ycf41), found in Pyropia yezoensis (Susabi-nori).